Reading from the N-terminus, the 235-residue chain is Protein RESISTANCE TO PHYTOPHTHORA 1, chloroplastic (235 aa).

Residues 1–43 (MNSATTMSASVLNYQILKFFPPQKNGFLKSPLIRGKICRFCVS) constitute a chloroplast transit peptide. The segment covering 53-66 (VIEDPKEETQEKSD) has biased composition (basic and acidic residues). The interval 53-92 (VIEDPKEETQEKSDGVIVNSTEEEEERSGENSTSTGPSTV) is disordered. 4 helical membrane-spanning segments follow: residues 131-151 (FEVQAYASMLIGGALSFNLIF), 158-178 (IWRLMGMWSIWMFTIPSLRAR), 188-208 (LNYLFLLVPLLNVAIPFFLKS), and 211-231 (VVWSADTVAFLGMYAWKLGWL).

The protein localises to the plastid. It is found in the chloroplast. The protein resides in the membrane. In terms of biological role, plays a positive role in the immune response to the oomycetes P.infestans, including induced oxidative burst and enhanced expression of defense-related genes. This is Protein RESISTANCE TO PHYTOPHTHORA 1, chloroplastic from Solanum tuberosum (Potato).